Here is a 57-residue protein sequence, read N- to C-terminus: Large ribosomal subunit protein bL32A (57 aa).

Positions 1-22 are disordered; it reads MAVPARRTSKTKKRLRRTHEKL. Basic residues predominate over residues 7-20; that stretch reads RTSKTKKRLRRTHE.

This sequence belongs to the bacterial ribosomal protein bL32 family.

This chain is Large ribosomal subunit protein bL32A (rpmF1), found in Enterococcus faecalis (strain ATCC 700802 / V583).